Consider the following 1204-residue polypeptide: Cingulin (1204 aa).

A head region spans residues 7–357 (MAEPRGPVDH…GVISSGSSKA (351 aa)). Residues 25 to 48 (EPVSGAEMGTLRRGGRRPAKDARA) form a disordered region. The short motif at 48–62 (ASTYGVAVRVQGIAG) is the ZIM element. Positions 54-67 (AVRVQGIAGQPFVV) are interaction with TJP1/ZO1. Disordered regions lie at residues 68 to 174 (LNSG…DTAP) and 186 to 266 (DGQL…FSRA). A compositionally biased stretch (polar residues) spans 93 to 119 (ALSSDSELPENPYSQVQGFPAPSQSST). Phosphoserine is present on residues serine 95, serine 96, serine 98, serine 135, serine 137, serine 140, serine 155, serine 165, serine 214, and serine 217. Residues 207–231 (EQRKRSKSLDSRLPRDTLEERERQS) are compositionally biased toward basic and acidic residues. Residues 232-245 (TNHWNPSTKYNNHV) are compositionally biased toward polar residues. Low complexity predominate over residues 247–261 (SLKQPAQSPSPSPLS). 4 positions are modified to phosphoserine: serine 258, serine 276, serine 338, and serine 351. Residues 358-1161 (MAGQGELARK…SLEKDSWRKA (804 aa)) are a coiled coil. The interval 379 to 398 (VKKRQKLEPSRAGLERQLEE) is disordered. N6-acetyllysine is present on lysine 579. Positions 1161-1182 (ASRSAAESALKHEGLSSDEEFD) are disordered. The segment at 1162–1204 (SRSAAESALKHEGLSSDEEFDSVYDPSSIASLLTESNLQTSSC) is tail. 3 positions are modified to phosphoserine: serine 1176, serine 1177, and serine 1183.

Belongs to the cingulin family. In terms of assembly, homodimer. Interacts with TJP1/ZO1 and SPEF1.

The protein resides in the cell junction. Its subcellular location is the tight junction. Functionally, probably plays a role in the formation and regulation of the tight junction (TJ) paracellular permeability barrier. This chain is Cingulin, found in Plecturocebus moloch (Dusky titi monkey).